Reading from the N-terminus, the 261-residue chain is HTH-type transcriptional repressor CsqR (261 aa).

The HTH deoR-type domain maps to 8-63 (GNPRHDQLLMLIAERGYMNIDELANLLDVSTQTVRRDIRKLSEQGLITRHHGGAGR). A DNA-binding region (H-T-H motif) is located at residues 25–44 (MNIDELANLLDVSTQTVRRD).

In terms of assembly, monomer in the absence of DNA. Exhibits a high level of cooperativity once it is bound to its target DNA.

Inactivated in the presence of the effectors sulfoquinovose and sulfoquinovosyl glycerol, leading to the de-repression of the target genes. Involved in the regulation of the sulfoquinovose operon. Represses the expression of the yihUTS operon and of the yihV and csqR genes. Binds DNA inside the spacer between the bidirectional transcription units comprising the yihUTS operon and the yihV gene, and upstream the csqR gene itself. In Escherichia coli (strain K12), this protein is HTH-type transcriptional repressor CsqR.